The sequence spans 629 residues: tRNA uridine 5-carboxymethylaminomethyl modification enzyme MnmG (629 aa).

FAD contacts are provided by residues 13–18 (GGGHAG), Val125, and Ser180. 273–287 (GPRYCPSIEDKVMRF) contributes to the NAD(+) binding site. Position 370 (Gln370) interacts with FAD.

It belongs to the MnmG family. As to quaternary structure, homodimer. Heterotetramer of two MnmE and two MnmG subunits. FAD is required as a cofactor.

Its subcellular location is the cytoplasm. Functionally, NAD-binding protein involved in the addition of a carboxymethylaminomethyl (cmnm) group at the wobble position (U34) of certain tRNAs, forming tRNA-cmnm(5)s(2)U34. The sequence is that of tRNA uridine 5-carboxymethylaminomethyl modification enzyme MnmG from Serratia proteamaculans (strain 568).